We begin with the raw amino-acid sequence, 256 residues long: Autophagy-related protein 40 (256 aa).

Residues 1-16 (MFNLILWPLFLLTSVA) form the signal peptide. The Lumenal segment spans residues 17-67 (IPLQLTLEVVYLTSSVDFSKASAAKTATSLGQSPVVITIYKSLLKYWSLYE). Residues 68–88 (FIHFIYLYTPIDAFLNFLPFT) traverse the membrane as a helical segment. The Cytoplasmic segment spans residues 89 to 256 (SLLMSFGSIC…DILDETTELD (168 aa)). The tract at residues 197–243 (QPQGDKNRYQNGDRESTKNGAAYQKSSQQSSSFEQNFTSTEFPNDYD) is disordered. Residues 199–213 (QGDKNRYQNGDREST) show a composition bias toward basic and acidic residues. Residues 222–238 (SSQQSSSFEQNFTSTEF) show a composition bias toward low complexity. An ATG8-binding motif is present at residues 242–245 (YDFM).

As to quaternary structure, interacts with ATG8 and ATG11.

It localises to the endoplasmic reticulum membrane. It is found in the preautophagosomal structure membrane. Its function is as follows. Acts as a receptor for reticulophagy. Directs autophagic sequestration of folded tubules/sheets derived from the cortical endoplasmic reticulum (cER) and the cytoplasmic endoplasmic reticulum (cytoER) into autophagosomes. Is not required for the cytoplasm-to-vacuole targeting pathway, mitophagy, pexophagy, and non-selective autophagy. This chain is Autophagy-related protein 40, found in Saccharomyces cerevisiae (strain ATCC 204508 / S288c) (Baker's yeast).